A 416-amino-acid chain; its full sequence is Serine hydroxymethyltransferase (416 aa).

(6S)-5,6,7,8-tetrahydrofolate-binding positions include Leu-121 and 125-127 (GHL). At Lys-229 the chain carries N6-(pyridoxal phosphate)lysine.

Belongs to the SHMT family. In terms of assembly, homodimer. Pyridoxal 5'-phosphate is required as a cofactor.

Its subcellular location is the cytoplasm. It carries out the reaction (6R)-5,10-methylene-5,6,7,8-tetrahydrofolate + glycine + H2O = (6S)-5,6,7,8-tetrahydrofolate + L-serine. It functions in the pathway one-carbon metabolism; tetrahydrofolate interconversion. It participates in amino-acid biosynthesis; glycine biosynthesis; glycine from L-serine: step 1/1. Its function is as follows. Catalyzes the reversible interconversion of serine and glycine with tetrahydrofolate (THF) serving as the one-carbon carrier. This reaction serves as the major source of one-carbon groups required for the biosynthesis of purines, thymidylate, methionine, and other important biomolecules. Also exhibits THF-independent aldolase activity toward beta-hydroxyamino acids, producing glycine and aldehydes, via a retro-aldol mechanism. This is Serine hydroxymethyltransferase from Neisseria meningitidis serogroup B (strain ATCC BAA-335 / MC58).